The sequence spans 197 residues: uncharacterized protein (197 aa).

The disordered stretch occupies residues 1 to 31; that stretch reads MMHFRKKSSISNTSDHDGANRASDVKISEDD. 2 positions are modified to phosphoserine: S11 and S23. A compositionally biased stretch (basic and acidic residues) spans 14-31; that stretch reads SDHDGANRASDVKISEDD. Glycyl lysine isopeptide (Lys-Gly) (interchain with G-Cter in ubiquitin) cross-links involve residues K26 and K32. Positions 157 to 197 are disordered; the sequence is VGGASSQMYGEQAVYQPQQHVQTEEKQKKKKKGLFGRMKKK. Residues 158–177 show a composition bias toward polar residues; that stretch reads GGASSQMYGEQAVYQPQQHV. Over residues 184–197 the composition is skewed to basic residues; sequence KKKKKGLFGRMKKK.

To yeast YGR273c.

This is an uncharacterized protein from Saccharomyces cerevisiae (strain ATCC 204508 / S288c) (Baker's yeast).